We begin with the raw amino-acid sequence, 192 residues long: Putative manganese efflux pump MntP (192 aa).

6 consecutive transmembrane segments (helical) span residues 3–23 (LIFT…AVSF), 38–58 (FILA…GWLL), 61–81 (GFAD…LFII), 101–121 (VFNF…ALAV), 130–150 (IVPL…SVGG), and 167–187 (ILGG…HLVW).

The protein belongs to the MntP (TC 9.B.29) family.

It is found in the cell membrane. In terms of biological role, probably functions as a manganese efflux pump. The sequence is that of Putative manganese efflux pump MntP from Methanospirillum hungatei JF-1 (strain ATCC 27890 / DSM 864 / NBRC 100397 / JF-1).